The sequence spans 827 residues: Periplasmic nitrate reductase (827 aa).

Residues 1–32 (MNLSRRDFMKANAALAAASVAGLIIPVKNVNA) constitute a signal peptide (tat-type signal). The region spanning 37-93 (ITWDKAVCRFCGTGCAVLVGTKDGRVVASQGDPDAEVNRGLNCIKGYFLPKIMYGKD) is the 4Fe-4S Mo/W bis-MGD-type domain. Residues Cys44, Cys47, Cys51, and Cys79 each contribute to the [4Fe-4S] cluster site. Mo-bis(molybdopterin guanine dinucleotide)-binding positions include Lys81, Gln148, Asn173, Cys177, 210-217 (WGSNMAEM), 242-246 (STFEH), 261-263 (QSD), Met372, Gln376, Asn482, 508-509 (SD), Lys531, Asp558, and 717-726 (TGRILEHWHT). Phe793 contributes to the substrate binding site. The Mo-bis(molybdopterin guanine dinucleotide) site is built by Asn801 and Lys818.

It belongs to the prokaryotic molybdopterin-containing oxidoreductase family. NasA/NapA/NarB subfamily. As to quaternary structure, component of the periplasmic nitrate reductase NapAB complex composed of NapA and NapB. [4Fe-4S] cluster is required as a cofactor. The cofactor is Mo-bis(molybdopterin guanine dinucleotide). In terms of processing, predicted to be exported by the Tat system. The position of the signal peptide cleavage has not been experimentally proven.

The protein localises to the periplasm. The catalysed reaction is 2 Fe(II)-[cytochrome] + nitrate + 2 H(+) = 2 Fe(III)-[cytochrome] + nitrite + H2O. Its function is as follows. Catalytic subunit of the periplasmic nitrate reductase complex NapAB. Receives electrons from NapB and catalyzes the reduction of nitrate to nitrite. The polypeptide is Periplasmic nitrate reductase (Histophilus somni (strain 2336) (Haemophilus somnus)).